A 358-amino-acid polypeptide reads, in one-letter code: Carbohydrate sulfotransferase 10 (358 aa).

The Cytoplasmic portion of the chain corresponds to 1 to 6 (MHHQWL). The helical; Signal-anchor for type II membrane protein transmembrane segment at 7–27 (LLAACFWVIFMFMVASKFITL) threads the bilayer. Over 28-358 (TFKDPDGYGA…GYRVPDFLLN (331 aa)) the chain is Lumenal. The N-linked (GlcNAc...) asparagine glycan is linked to Asn-101. Residues 129–135 (PKVGNTQ) and 191–199 (RDPFERLIS) each bind 3'-phosphoadenylyl sulfate. An N-linked (GlcNAc...) asparagine glycan is attached at Asn-318.

This sequence belongs to the sulfotransferase 2 family. In terms of tissue distribution, predominantly expressed in hypertrophic, prehypertrophic and proliferative chondrocytes at E12 but is down-regulated in epiphyseal chondrocytes.

It is found in the golgi apparatus membrane. In terms of biological role, catalyzes the transfer of sulfate to position 3 of terminal glucuronic acid of both protein- and lipid-linked oligosaccharides. Participates in biosynthesis of HNK-1 carbohydrate structure, a sulfated glucuronyl-lactosaminyl residue carried by many neural recognition molecules, which is involved in cell interactions during ontogenetic development and in synaptic plasticity in the adult. This is Carbohydrate sulfotransferase 10 (CHST10) from Gallus gallus (Chicken).